The primary structure comprises 160 residues: Na(+)/H(+) antiporter subunit E1 (160 aa).

Transmembrane regions (helical) follow at residues 1-21, 27-47, 49-69, and 101-121; these read MAIQ…VTGS, FILG…VLPG, FYLI…IELI, and WQIV…VLGI.

This sequence belongs to the CPA3 antiporters (TC 2.A.63) subunit E family. In terms of assembly, may form a heterooligomeric complex that consists of seven subunits: mnhA1, mnhB1, mnhC1, mnhD1, mnhE1, mnhF1 and mnhG1.

The protein localises to the cell membrane. Its function is as follows. Mnh complex is a Na(+)/H(+) antiporter involved in Na(+) excretion. The sequence is that of Na(+)/H(+) antiporter subunit E1 (mnhE1) from Staphylococcus saprophyticus subsp. saprophyticus (strain ATCC 15305 / DSM 20229 / NCIMB 8711 / NCTC 7292 / S-41).